A 404-amino-acid chain; its full sequence is Cysteine desulfurase IscS (404 aa).

Pyridoxal 5'-phosphate-binding positions include 75–76, Asn155, Gln183, and 203–205; these read AT and SAH. At Lys206 the chain carries N6-(pyridoxal phosphate)lysine. A pyridoxal 5'-phosphate-binding site is contributed by Thr243. The active-site Cysteine persulfide intermediate is the Cys328. Cys328 serves as a coordination point for [2Fe-2S] cluster.

Belongs to the class-V pyridoxal-phosphate-dependent aminotransferase family. NifS/IscS subfamily. In terms of assembly, homodimer. Forms a heterotetramer with IscU, interacts with other sulfur acceptors. It depends on pyridoxal 5'-phosphate as a cofactor.

It is found in the cytoplasm. The catalysed reaction is (sulfur carrier)-H + L-cysteine = (sulfur carrier)-SH + L-alanine. Its pathway is cofactor biosynthesis; iron-sulfur cluster biosynthesis. Its function is as follows. Master enzyme that delivers sulfur to a number of partners involved in Fe-S cluster assembly, tRNA modification or cofactor biosynthesis. Catalyzes the removal of elemental sulfur atoms from cysteine to produce alanine. Functions as a sulfur delivery protein for Fe-S cluster synthesis onto IscU, an Fe-S scaffold assembly protein, as well as other S acceptor proteins. In Neisseria meningitidis serogroup C / serotype 2a (strain ATCC 700532 / DSM 15464 / FAM18), this protein is Cysteine desulfurase IscS.